The primary structure comprises 1363 residues: Spike glycoprotein (1363 aa).

An N-terminal signal peptide occupies residues 1–13; that stretch reads MFLILLISLPTAF. The Extracellular portion of the chain corresponds to 14 to 1307; the sequence is AVIGDLKCTT…GTYEYYVKWP (1294 aa). Positions 15 to 298 constitute a BetaCoV S1-NTD domain; sequence VIGDLKCTTV…DFMSEIKCKT (284 aa). Cystine bridges form between Cys-21/Cys-165, Cys-160/Cys-193, Cys-172/Cys-252, Cys-286/Cys-296, and Cys-331/Cys-356. Residues Asn-59 and Asn-133 are each glycosylated (N-linked (GlcNAc...) asparagine; by host). Residue Asn-198 is glycosylated (N-linked (GlcNAc...) asparagine; by host). The BetaCoV S1-CTD domain maps to 329–617; sequence PDCNIEAWLN…DVNSGTTCST (289 aa). Asn-359 is a glycosylation site (N-linked (GlcNAc...) asparagine; by host). 2 cysteine pairs are disulfide-bonded: Cys-374–Cys-427 and Cys-386–Cys-615. 7 N-linked (GlcNAc...) asparagine; by host glycosylation sites follow: Asn-437, Asn-649, Asn-676, Asn-696, Asn-714, Asn-739, and Asn-788. Fusion peptide regions lie at residues 914-935 and 933-953; these read SAIE…VEAY and EAYN…VQSY. An N-linked (GlcNAc...) asparagine; by host glycan is attached at Asn-937. The cysteines at positions 938 and 949 are disulfide-linked. Residues 1014-1064 form a heptad repeat 1 region; that stretch reads QKLIANAFNNALGAIQEGFDATNSALVKIQAVVNANAETLNNLLQQLSNRF. The stretch at 1043–1087 forms a coiled coil; the sequence is QAVVNANAETLNNLLQQLSNRFGAISSSLQEILSRLDALEAQAQI. Asn-1194, Asn-1224, Asn-1234, Asn-1253, Asn-1267, and Asn-1288 each carry an N-linked (GlcNAc...) asparagine; by host glycan. Residues 1258–1296 form a heptad repeat 2 region; the sequence is APDLSLDYINVTFLDLQDEMNRLQEAIKVLNQSYINLKD. Residues 1269 to 1297 adopt a coiled-coil conformation; it reads TFLDLQDEMNRLQEAIKVLNQSYINLKDI. A helical transmembrane segment spans residues 1308–1328; sequence WYVWLLIGFAGVAMLVLLFFI. The Cytoplasmic segment spans residues 1329–1363; sequence CCCTGCGTSCFKKCGGCCDDYTGHQELVIKTSHED. The KxHxx motif lies at 1359-1363; the sequence is TSHED.

This sequence belongs to the betacoronaviruses spike protein family. Homotrimer; each monomer consists of a S1 and a S2 subunit. The resulting peplomers protrude from the virus surface as spikes. Post-translationally, specific enzymatic cleavages in vivo yield mature proteins. The precursor is processed into S1 and S2 by host cell furin or another cellular protease to yield the mature S1 and S2 proteins. Additionally, a second cleavage leads to the release of a fusion peptide after viral attachment to host cell receptor. The cytoplasmic Cys-rich domain is palmitoylated. Spike glycoprotein is digested within host endosomes.

It is found in the virion membrane. It localises to the host endoplasmic reticulum-Golgi intermediate compartment membrane. Its subcellular location is the host cell membrane. Attaches the virion to the cell membrane by interacting with host receptor, initiating the infection. Functionally, mediates fusion of the virion and cellular membranes by acting as a class I viral fusion protein. Under the current model, the protein has at least three conformational states: pre-fusion native state, pre-hairpin intermediate state, and post-fusion hairpin state. During viral and target cell membrane fusion, the coiled coil regions (heptad repeats) assume a trimer-of-hairpins structure, positioning the fusion peptide in close proximity to the C-terminal region of the ectodomain. The formation of this structure appears to drive apposition and subsequent fusion of viral and target cell membranes. In terms of biological role, acts as a viral fusion peptide which is unmasked following S2 cleavage occurring upon virus endocytosis. The protein is Spike glycoprotein of Bovine coronavirus (strain 98TXSF-110-LUN) (BCoV-LUN).